The following is a 331-amino-acid chain: Ketol-acid reductoisomerase (NADP(+)) (331 aa).

The KARI N-terminal Rossmann domain maps to 2–182 (ARMYYDADAN…GGTRGGILET (181 aa)). NADP(+) is bound by residues 25-28 (YGSQ), Ser-51, Ser-53, and 83-86 (DDVQ). The active site involves His-108. Gly-134 contributes to the NADP(+) binding site. The 146-residue stretch at 183-328 (TFREETETDL…KDLRAMFSWL (146 aa)) folds into the KARI C-terminal knotted domain. Asp-191, Glu-195, Glu-227, and Glu-231 together coordinate Mg(2+). Ser-252 is a binding site for substrate.

Belongs to the ketol-acid reductoisomerase family. Requires Mg(2+) as cofactor.

It catalyses the reaction (2R)-2,3-dihydroxy-3-methylbutanoate + NADP(+) = (2S)-2-acetolactate + NADPH + H(+). The enzyme catalyses (2R,3R)-2,3-dihydroxy-3-methylpentanoate + NADP(+) = (S)-2-ethyl-2-hydroxy-3-oxobutanoate + NADPH + H(+). Its pathway is amino-acid biosynthesis; L-isoleucine biosynthesis; L-isoleucine from 2-oxobutanoate: step 2/4. It participates in amino-acid biosynthesis; L-valine biosynthesis; L-valine from pyruvate: step 2/4. Involved in the biosynthesis of branched-chain amino acids (BCAA). Catalyzes an alkyl-migration followed by a ketol-acid reduction of (S)-2-acetolactate (S2AL) to yield (R)-2,3-dihydroxy-isovalerate. In the isomerase reaction, S2AL is rearranged via a Mg-dependent methyl migration to produce 3-hydroxy-3-methyl-2-ketobutyrate (HMKB). In the reductase reaction, this 2-ketoacid undergoes a metal-dependent reduction by NADPH to yield (R)-2,3-dihydroxy-isovalerate. In Picosynechococcus sp. (strain ATCC 27264 / PCC 7002 / PR-6) (Agmenellum quadruplicatum), this protein is Ketol-acid reductoisomerase (NADP(+)).